We begin with the raw amino-acid sequence, 956 residues long: MENMSEQALPHEVNQVAEQHWQRLAEAWPDISEQLTPEQTKELKTIFGLSDFVAEQLCRHPNWIVSLFEGQLSMLARDSFSSELHSILAGANDEEQVKAILRRYRNRQMVRLAWRDFLGYAELNDSLLDLSALAEALIIAARDWLYGQMCQQYGTPCDSEGNPQPLMILGMGKLGGRELNFSSDIDLIFTFPEHGETQGGRRSQDNQQFFIRMGQRLVNLLNQVTVDGFVYRVDMRLRPYGESGPLVVSFSGLEDYYQEQGRDWERYAMVKARALGPWSAYSDELHDMLRPFVYRRYIDFSAIESLRKMKQLITQEVRRRRLTDNIKLGAGGIREVEFVVQSFQLIRGGREPALRQQSLFGAIDTLYKLGQLEYLAVDELKQSYLMLRRVENLLQAIGDQQTQTLPQHLLDWQRLCFALGMAGEAELRTHIESAMAKIHRYFKETVGGQESDEVAEQWTAQLWSLVDDEDAEALLKEHGVEESELWPALKSWRGTVAKRTIGPRGRETLDKLMPWLLQEFIQLPTPTKAFLPVSKVLDQILTRTTYLELLFENPGARQQLVSLCMASPWIGEQLAKFPMLLDELIDPAQLYDTTSLDDYPSELRQYLLRVPEEDMEQQMEALRQFKLSQQLKIAAADVTGVLPVMQVSDHLTFLAEAIIEQVVLQAWQQVSKRHGTPSYLAPEEMGFAVIGYGKAGGLELGYGSDLDLVFLHNYTRDKYPDAQQTNGDRPIDIGHFYLKLAQRILHLFSTRTTSGELYEVDMRLRPSGASGLLVSEIEYFGSYQREEAWTWEHQALVRARFLFGDNRLAARFSELRADVLAMERDKAELAKEVREMRQKMRTHLLKVDEGCFDLKQSPGGIADIEFIAQYLVLANTHDHPELAIWSDNVRIFEVLSELELLPHLSAQHLTQAYCYLRDESHRLTLQQAPGQLPQESVDLHVQRVLAIYEQVLNNGQ.

The segment at 1–450 (MENMSEQALP…YFKETVGGQE (450 aa)) is adenylyl removase. The adenylyl transferase stretch occupies residues 456 to 956 (EQWTAQLWSL…IYEQVLNNGQ (501 aa)).

The protein belongs to the GlnE family. It depends on Mg(2+) as a cofactor.

It carries out the reaction [glutamine synthetase]-O(4)-(5'-adenylyl)-L-tyrosine + phosphate = [glutamine synthetase]-L-tyrosine + ADP. The enzyme catalyses [glutamine synthetase]-L-tyrosine + ATP = [glutamine synthetase]-O(4)-(5'-adenylyl)-L-tyrosine + diphosphate. Functionally, involved in the regulation of glutamine synthetase GlnA, a key enzyme in the process to assimilate ammonia. When cellular nitrogen levels are high, the C-terminal adenylyl transferase (AT) inactivates GlnA by covalent transfer of an adenylyl group from ATP to specific tyrosine residue of GlnA, thus reducing its activity. Conversely, when nitrogen levels are low, the N-terminal adenylyl removase (AR) activates GlnA by removing the adenylyl group by phosphorolysis, increasing its activity. The regulatory region of GlnE binds the signal transduction protein PII (GlnB) which indicates the nitrogen status of the cell. This is Bifunctional glutamine synthetase adenylyltransferase/adenylyl-removing enzyme from Shewanella loihica (strain ATCC BAA-1088 / PV-4).